Here is a 273-residue protein sequence, read N- to C-terminus: 4-hydroxy-tetrahydrodipicolinate reductase (273 aa).

Residues glycine 12–methionine 17 and glutamate 38 each bind NAD(+). Arginine 39 serves as a coordination point for NADP(+). NAD(+)-binding positions include glycine 102–threonine 104 and alanine 126–phenylalanine 129. Histidine 159 functions as the Proton donor/acceptor in the catalytic mechanism. Histidine 160 is a binding site for (S)-2,3,4,5-tetrahydrodipicolinate. Catalysis depends on lysine 163, which acts as the Proton donor. A (S)-2,3,4,5-tetrahydrodipicolinate-binding site is contributed by glycine 169–threonine 170.

It belongs to the DapB family. Homotetramer.

Its subcellular location is the cytoplasm. It carries out the reaction (S)-2,3,4,5-tetrahydrodipicolinate + NAD(+) + H2O = (2S,4S)-4-hydroxy-2,3,4,5-tetrahydrodipicolinate + NADH + H(+). It catalyses the reaction (S)-2,3,4,5-tetrahydrodipicolinate + NADP(+) + H2O = (2S,4S)-4-hydroxy-2,3,4,5-tetrahydrodipicolinate + NADPH + H(+). It participates in amino-acid biosynthesis; L-lysine biosynthesis via DAP pathway; (S)-tetrahydrodipicolinate from L-aspartate: step 4/4. Functionally, catalyzes the conversion of 4-hydroxy-tetrahydrodipicolinate (HTPA) to tetrahydrodipicolinate. This chain is 4-hydroxy-tetrahydrodipicolinate reductase, found in Klebsiella pneumoniae subsp. pneumoniae (strain ATCC 700721 / MGH 78578).